The chain runs to 68 residues: Protein SlyX homolog (68 aa).

It belongs to the SlyX family.

The chain is Protein SlyX homolog from Pseudomonas syringae pv. syringae (strain B728a).